The following is a 336-amino-acid chain: Galectin-12 (336 aa).

Galectin domains are found at residues 49 to 183 (YVTT…VGFL) and 212 to 336 (CSHA…CVHS).

In terms of tissue distribution, not widely expressed. Predominantly expressed in adipose tissue.

It localises to the nucleus. Binds lactose. May participate in the apoptosis of adipocytes. The polypeptide is Galectin-12 (LGALS12) (Homo sapiens (Human)).